Here is a 119-residue protein sequence, read N- to C-terminus: Beta-2-microglobulin (119 aa).

Residues 1 to 20 (MARFVVVALLVQLSLFGLEA) form the signal peptide. In terms of domain architecture, Ig-like C1-type spans 25-114 (PKIQVYSRYP…VTFSTPKTVK (90 aa)). A disulfide bridge connects residues C45 and C100.

The protein belongs to the beta-2-microglobulin family. Heterodimer of an alpha chain and a beta chain. Beta-2-microglobulin is the beta-chain of major histocompatibility complex class I molecules.

It localises to the secreted. Component of the class I major histocompatibility complex (MHC). Involved in the presentation of peptide antigens to the immune system. This is Beta-2-microglobulin (B2M) from Saguinus imperator (Emperor tamarin).